Here is a 475-residue protein sequence, read N- to C-terminus: Lipoprotein lipase (475 aa).

The N-terminal stretch at 1-27 is a signal peptide; the sequence is MESKALLLVALGMWFQSLTATRGGVAA. The segment at 32–53 is interaction with GPIHBP1; that stretch reads GDFIDIESKFALRTPEDTAEDT. The cysteines at positions 54 and 67 are disulfide-linked. N70 is a glycosylation site (N-linked (GlcNAc...) asparagine). At Y121 the chain carries 3'-nitrotyrosine. Residue S159 is the Nucleophile of the active site. Residue D183 is the Charge relay system of the active site. The residue at position 191 (Y191) is a 3'-nitrotyrosine. Ca(2+) is bound by residues A194, R197, S199, and D202. C243 and C266 are disulfide-bonded. The active-site Charge relay system is the H268. 2 disulfide bridges follow: C291-C310 and C302-C305. Residues 341 to 464 enclose the PLAT domain; sequence FHYQVKIHFS…KGKASVVFVK (124 aa). At Y343 the chain carries 3'-nitrotyrosine. A glycan (N-linked (GlcNAc...) asparagine) is linked at N386. The important for interaction with lipoprotein particles stretch occupies residues 417–421; it reads WSDWW. Residues 430–434 are important for heparin binding; that stretch reads KIRVK. The interaction with GPIHBP1 stretch occupies residues 443 to 467; sequence IFCSREKVSHLQKGKASVVFVKCHD. C445 and C465 are disulfide-bonded.

This sequence belongs to the AB hydrolase superfamily. Lipase family. In terms of assembly, homodimer. Interacts with GPIHBP1 with 1:1 stoichiometry. Interacts with APOC2; the interaction activates LPL activity in the presence of lipids. Interaction with heparan sulfate proteoglycans is required to protect LPL against loss of activity. Associates with lipoprotein particles in blood plasma. Interacts with LMF1 and SEL1L; interaction with SEL1L is required to prevent aggregation of newly synthesized LPL in the endoplasmic reticulum (ER), and for normal export of LPL from the ER to the extracellular space. Interacts with SORL1; SORL1 acts as a sorting receptor, promoting LPL localization to endosomes and later to lysosomes, leading to degradation of newly synthesized LPL. Tyrosine nitration after lipopolysaccharide (LPS) challenge down-regulates the lipase activity.

Its subcellular location is the cell membrane. It is found in the secreted. The protein resides in the extracellular space. It localises to the extracellular matrix. It carries out the reaction a triacylglycerol + H2O = a diacylglycerol + a fatty acid + H(+). With respect to regulation, the apolipoprotein APOC2 acts as a coactivator of LPL activity. Ca(2+) binding promotes protein stability and formation of the active homodimer. Interaction with GPIHBP1 protects LPL against inactivation by ANGPTL4. In terms of biological role, key enzyme in triglyceride metabolism. Catalyzes the hydrolysis of triglycerides from circulating chylomicrons and very low density lipoproteins (VLDL), and thereby plays an important role in lipid clearance from the blood stream, lipid utilization and storage. Mediates margination of triglyceride-rich lipoprotein particles in capillaries. Recruited to its site of action on the luminal surface of vascular endothelium by binding to GPIHBP1 and cell surface heparan sulfate proteoglycans. The protein is Lipoprotein lipase (LPL) of Neovison vison (American mink).